A 345-amino-acid polypeptide reads, in one-letter code: Heat-inducible transcription repressor HrcA (345 aa).

This sequence belongs to the HrcA family.

Negative regulator of class I heat shock genes (grpE-dnaK-dnaJ and groELS operons). Prevents heat-shock induction of these operons. This chain is Heat-inducible transcription repressor HrcA, found in Listeria monocytogenes serotype 1/2a (strain 10403S).